The following is a 166-amino-acid chain: Large ribosomal subunit protein uL10 (166 aa).

It belongs to the universal ribosomal protein uL10 family. In terms of assembly, part of the ribosomal stalk of the 50S ribosomal subunit. The N-terminus interacts with L11 and the large rRNA to form the base of the stalk. The C-terminus forms an elongated spine to which L12 dimers bind in a sequential fashion forming a multimeric L10(L12)X complex.

Functionally, forms part of the ribosomal stalk, playing a central role in the interaction of the ribosome with GTP-bound translation factors. The sequence is that of Large ribosomal subunit protein uL10 from Aeromonas hydrophila subsp. hydrophila (strain ATCC 7966 / DSM 30187 / BCRC 13018 / CCUG 14551 / JCM 1027 / KCTC 2358 / NCIMB 9240 / NCTC 8049).